The following is a 472-amino-acid chain: Glutamate-1-semialdehyde 2,1-aminomutase 2, chloroplastic (472 aa).

The N-terminal 36 residues, 1 to 36 (MAATLTGSGIALGFSCSAKFSKRASSSSNRRCIKMS), are a transit peptide targeting the chloroplast. Lys-312 carries the post-translational modification N6-(pyridoxal phosphate)lysine.

It belongs to the class-III pyridoxal-phosphate-dependent aminotransferase family. HemL subfamily. As to quaternary structure, homodimer. Pyridoxal 5'-phosphate is required as a cofactor. As to expression, expressed in leaf primordia and shoot apical meristems (SAM).

Its subcellular location is the plastid. It localises to the chloroplast. It catalyses the reaction (S)-4-amino-5-oxopentanoate = 5-aminolevulinate. It functions in the pathway porphyrin-containing compound metabolism; protoporphyrin-IX biosynthesis; 5-aminolevulinate from L-glutamyl-tRNA(Glu): step 2/2. The protein operates within porphyrin-containing compound metabolism; chlorophyll biosynthesis. Functionally, transaminase converting glutamate 1-semialdehyde (GSA) to 5-aminolevulinate (ALA). Involved in the biosynthesis of tetrapyrroles. The polypeptide is Glutamate-1-semialdehyde 2,1-aminomutase 2, chloroplastic (Arabidopsis thaliana (Mouse-ear cress)).